A 794-amino-acid chain; its full sequence is Copper amine oxidase-like protein cao2 (794 aa).

Substrate contacts are provided by residues 307 to 318 (AYDLGEYGVGYR) and 391 to 396 (AANYEY). Aspartate 309 serves as the catalytic Proton acceptor. The active-site Schiff-base intermediate with substrate; via topaquinone is tyrosine 394. The residue at position 394 (tyrosine 394) is a 2',4',5'-topaquinone. The Cu cation site is built by histidine 445 and histidine 447. Residues 563-584 (GDYAPQASDDTPKGLSKWISDD) form a disordered region. Mn(2+)-binding residues include aspartate 593 and isoleucine 594. Histidine 604 contributes to the Cu cation binding site. The disordered stretch occupies residues 634-748 (ALDTSSSVNS…NGGHHHHHHH (115 aa)). Positions 637–649 (TSSSVNSTSEATS) are enriched in low complexity. Over residues 652 to 714 (THHENLRDTS…DAAQKHEGRS (63 aa)) the composition is skewed to basic and acidic residues. The span at 716 to 727 (TLAQPGQQNANQ) shows a compositional bias: polar residues.

It belongs to the copper/topaquinone oxidase family. In terms of assembly, homodimer. It depends on Cu cation as a cofactor. Zn(2+) serves as cofactor. The cofactor is L-topaquinone. Requires Mn(2+) as cofactor. Post-translationally, topaquinone (TPQ) is generated by copper-dependent autoxidation of a specific tyrosyl residue.

It localises to the cytoplasm. The catalysed reaction is a primary methyl amine + O2 + H2O = an aldehyde + H2O2 + NH4(+). Its function is as follows. Copper amine oxidase-like protein that does not show any copper amine oxidase activity. May be the appropriate amine substrate for cao2 has not been identified yet. In Schizosaccharomyces pombe (strain 972 / ATCC 24843) (Fission yeast), this protein is Copper amine oxidase-like protein cao2 (cao2).